The sequence spans 519 residues: Probable WRKY transcription factor 33 (519 aa).

Disordered stretches follow at residues M1–S34 and S123–P212. Positions T7 to S34 are enriched in polar residues. Residues T130–T142 show a composition bias toward low complexity. The segment covering T164–S174 has biased composition (polar residues). A compositionally biased stretch (basic and acidic residues) spans R178 to N188. Residues R178–P242 constitute a DNA-binding region (WRKY 1). The Zn(2+) site is built by C209, C214, H237, and H239. 2 disordered regions span residues V232–F255 and N267–R349. A compositionally biased stretch (low complexity) spans T245–T254. Over residues Q269–S299 the composition is skewed to polar residues. The segment covering P323–N332 has biased composition (basic and acidic residues). A DNA-binding region (WRKY 2) is located at residues S356–P421. C387, C392, H416, and H418 together coordinate Zn(2+).

This sequence belongs to the WRKY group I family. In terms of assembly, interacts with MKS1. Interacts with ATG18A. Interacts with SIB1 and SIB2. Interacts with VQ1 and VQ10. Phosphorylated by MPK4. Phosphorylated on serine residues by MPK3 and MPK6 following infection with the necrotrophic fungal pathogen B.cinerea. In terms of tissue distribution, highly expressed in roots, leaves and flowers, and at lower levels in stems, siliques and seeds.

It localises to the nucleus. Its function is as follows. Transcription factor. Interacts specifically with the W box (5'-TTGAC[CT]-3'), a frequently occurring elicitor-responsive cis-acting element. Involved in defense responses. Required for resistance to the necrotrophic fungal pathogen B.cinerea. Regulates the antagonistic relationship between defense pathways mediating responses to the bacterial pathogen P. syringae and the necrotrophic pathogen B.cinerea. Required for the phytoalexin camalexin synthesis following infection with B.cinerea. Acts as a positive regulator of the camalexin biosynthetic genes PAD3 (CYP71B15) and CYP71A13 by binding to their promoters. Acts downstream of MPK3 and MPK6 in reprogramming the expression of camalexin biosynthetic genes, which drives the metabolic flow to camalexin production. Functions with WRKY25 as positive regulator of salt stress response and abscisic acid (ABA) signaling. Functions with WRKY25 and WRKY26 as positive regulator of plant thermotolerance by partially participating in ethylene-response signal transduction pathway. The DNA-binding activity of WRKY33 is increased by SIB1 and SIB2. This is Probable WRKY transcription factor 33 (WRKY33) from Arabidopsis thaliana (Mouse-ear cress).